A 473-amino-acid polypeptide reads, in one-letter code: Asparagine--tRNA ligase (473 aa).

This sequence belongs to the class-II aminoacyl-tRNA synthetase family. In terms of assembly, homodimer.

The protein localises to the cytoplasm. The catalysed reaction is tRNA(Asn) + L-asparagine + ATP = L-asparaginyl-tRNA(Asn) + AMP + diphosphate + H(+). The polypeptide is Asparagine--tRNA ligase (Treponema denticola (strain ATCC 35405 / DSM 14222 / CIP 103919 / JCM 8153 / KCTC 15104)).